We begin with the raw amino-acid sequence, 157 residues long: Capsid protein (157 aa).

S2 is subject to N-acetylserine; by host.

It belongs to the virgaviridae capsid protein family.

The protein localises to the virion. Its function is as follows. Capsid protein self-assembles to form rod-shaped virions about 18 nm in diameter with a central canal enclosing the viral genomic RNA. The protein is Capsid protein (CP) of Ribgrass mosaic virus (RMV).